A 340-amino-acid chain; its full sequence is Glyceraldehyde-3-phosphate dehydrogenase (340 aa).

Residues 12 to 13, aspartate 40, lysine 85, and serine 128 each bind NAD(+); that span reads RI. D-glyceraldehyde 3-phosphate is bound by residues 158–160, threonine 189, arginine 204, 217–218, and arginine 240; these read SCT and TG. Cysteine 159 serves as the catalytic Nucleophile. Lysine 257 is covalently cross-linked (Isoglutamyl lysine isopeptide (Lys-Gln) (interchain with Q-Cter in protein Pup)). Asparagine 321 is an NAD(+) binding site.

The protein belongs to the glyceraldehyde-3-phosphate dehydrogenase family. As to quaternary structure, homotetramer.

The protein localises to the cytoplasm. The catalysed reaction is D-glyceraldehyde 3-phosphate + phosphate + NAD(+) = (2R)-3-phospho-glyceroyl phosphate + NADH + H(+). Its pathway is carbohydrate degradation; glycolysis; pyruvate from D-glyceraldehyde 3-phosphate: step 1/5. In terms of biological role, catalyzes the oxidative phosphorylation of glyceraldehyde 3-phosphate (G3P) to 1,3-bisphosphoglycerate (BPG) using the cofactor NAD. The first reaction step involves the formation of a hemiacetal intermediate between G3P and a cysteine residue, and this hemiacetal intermediate is then oxidized to a thioester, with concomitant reduction of NAD to NADH. The reduced NADH is then exchanged with the second NAD, and the thioester is attacked by a nucleophilic inorganic phosphate to produce BPG. This Mycolicibacterium smegmatis (strain ATCC 700084 / mc(2)155) (Mycobacterium smegmatis) protein is Glyceraldehyde-3-phosphate dehydrogenase (gapA).